Here is a 246-residue protein sequence, read N- to C-terminus: Small ribosomal subunit protein uS2 (246 aa).

Residues 226–246 (QGEEEAEVAEETAPETETTTA) are disordered. Over residues 229–239 (EEAEVAEETAP) the composition is skewed to acidic residues.

The protein belongs to the universal ribosomal protein uS2 family. Part of the 30S ribosomal subunit. Interacts with BrxC.

The sequence is that of Small ribosomal subunit protein uS2 (rpsB) from Bacillus subtilis (strain 168).